The primary structure comprises 299 residues: MNSKSSARAAIVDTVEAVKKRKYISIDEGTLNNVVEKERKFLKQFLSGRQNLRIAARVFTPCELLAPELENLGMLMYRFETDVDNPKILFVGLFFLCSNAFNVSTCVRTALTAMYTNSMVDNVLSMINTCRYLEDKVSLFGVTSLVSCGSSCLLSCVMQGNVYDVNKENIYGLTVLKEIILEPDWEPRQHSTQYVYVVHVYKEVLAKLQYGIYVVLTSFQNEDLIVDILRQYFEKERFLFLNYLINSNTTLSYFGSVQRIGRCATEDIKSGFLQYRGITLSVIKLENIFVDLSEKKVFV.

This sequence belongs to the herpesviridae TRX1 protein family. Interacts with TRX2, MCP and capsid vertex component 2/CVC2.

Its subcellular location is the virion. The protein localises to the host nucleus. In terms of biological role, structural component of the T=16 icosahedral capsid. The capsid is composed of pentamers and hexamers of major capsid protein/MCP, which are linked together by heterotrimers called triplexes. These triplexes are formed by a single molecule of triplex protein 1/TRX1 and two copies of triplex protein 2/TRX2. Additionally, TRX1 is required for efficient transport of TRX2 to the nucleus, which is the site of capsid assembly. The chain is Triplex capsid protein 1 from Homo sapiens (Human).